The primary structure comprises 366 residues: Mitogen-activated protein kinase p38a (366 aa).

The Protein kinase domain maps to 25-312 (YQDLQPVGSG…AEEALSHPYL (288 aa)). ATP-binding positions include 31-39 (VGSGAYGQV) and Lys-54. Asp-154 functions as the Proton acceptor in the catalytic mechanism. The residue at position 184 (Thr-184) is a Phosphothreonine. Residues 184-186 (TGY) carry the TXY motif. Tyr-186 is modified (phosphotyrosine).

It belongs to the protein kinase superfamily. CMGC Ser/Thr protein kinase family. MAP kinase subfamily. Requires Mg(2+) as cofactor. Post-translationally, dually phosphorylated on Thr-184 and Tyr-186, which activates the enzyme.

Its subcellular location is the nucleus. It catalyses the reaction L-seryl-[protein] + ATP = O-phospho-L-seryl-[protein] + ADP + H(+). The catalysed reaction is L-threonyl-[protein] + ATP = O-phospho-L-threonyl-[protein] + ADP + H(+). With respect to regulation, activated by threonine and tyrosine phosphorylation by Mkk3 in response to environmental stress. Kinase involved in a signal transduction pathway. May down-regulate insect immunity gene expression after prolonged infection. This is Mitogen-activated protein kinase p38a from Drosophila melanogaster (Fruit fly).